Consider the following 201-residue polypeptide: Glycerol-3-phosphate acyltransferase (201 aa).

Transmembrane regions (helical) follow at residues 4 to 24 (LVAATLGGYLLGSVPFGLVLT), 55 to 75 (LATLLLDGGKGAIAVGLVWVL), 80 to 100 (MVPVAGFAAVLGHNFPVWLGF), 110 to 130 (IGTLLAAAWPVGLACIGTWLV), and 152 to 174 (FALYFAGPQYALMAAGLAVMGFY).

Belongs to the PlsY family. Probably interacts with PlsX.

It localises to the cell inner membrane. It catalyses the reaction an acyl phosphate + sn-glycerol 3-phosphate = a 1-acyl-sn-glycero-3-phosphate + phosphate. It participates in lipid metabolism; phospholipid metabolism. Its function is as follows. Catalyzes the transfer of an acyl group from acyl-phosphate (acyl-PO(4)) to glycerol-3-phosphate (G3P) to form lysophosphatidic acid (LPA). This enzyme utilizes acyl-phosphate as fatty acyl donor, but not acyl-CoA or acyl-ACP. The chain is Glycerol-3-phosphate acyltransferase from Paramagnetospirillum magneticum (strain ATCC 700264 / AMB-1) (Magnetospirillum magneticum).